The following is a 759-amino-acid chain: RNA-binding protein 28 (759 aa).

At Ala2 the chain carries N-acetylalanine. Residues 4–80 enclose the RRM 1 domain; that stretch reads LTLFVGRLPP…CKINVTVAKK (77 aa). The disordered stretch occupies residues 84–105; sequence NKTKEKGKNENSECPKKEPKAK. The span at 85–101 shows a compositional bias: basic and acidic residues; it reads KTKEKGKNENSECPKKE. Positions 114-191 constitute an RRM 2 domain; the sequence is ARLIIRNLSF…RTVAVDWAVA (78 aa). Ser122 is modified (phosphoserine). The tract at residues 201–330 is disordered; it reads VSAIGEEKSH…NKKKRKLPSD (130 aa). Positions 205-224 are enriched in basic and acidic residues; that stretch reads GEEKSHESKHQESVKKKGRE. 2 stretches are compositionally biased toward acidic residues: residues 225 to 256 and 284 to 313; these read EEDM…EEEN and SEED…EEQE. 2 RRM domains span residues 335–419 and 487–597; these read KTVF…LAVT and TRLC…RSLQ. Ser397 bears the Phosphoserine mark. The segment at 594-759 is disordered; that stretch reads RSLQKMRSKP…LAKRSKWFDS (166 aa). Residues 615–640 are compositionally biased toward basic and acidic residues; the sequence is PAKDQQQKAAQHHTEEQSKVPPEQKR. A Glycyl lysine isopeptide (Lys-Gly) (interchain with G-Cter in SUMO2) cross-link involves residue Lys653. The segment covering 689–698 has biased composition (basic residues); that stretch reads VKPVHPKKPK. Residues 700–715 are compositionally biased toward polar residues; the sequence is QINQWKQEKQQLSSEQ.

In terms of assembly, interacts with U1, U2, U4, U5, and U6 spliceosomal small nuclear RNAs (snRNAs). In terms of tissue distribution, ubiquitously expressed.

It is found in the nucleus. It localises to the nucleolus. Functionally, nucleolar component of the spliceosomal ribonucleoprotein complexes. This Homo sapiens (Human) protein is RNA-binding protein 28 (RBM28).